Here is a 392-residue protein sequence, read N- to C-terminus: ESX-1 secretion-associated protein EspA (392 aa).

The disordered stretch occupies residues 302–392; that stretch reads TRQALRPRAD…GQKVLVRNVV (91 aa). Over residues 334 to 344 the composition is skewed to gly residues; sequence QGMGGPVGMGG.

In terms of assembly, homodimer; disulfide-linked.

It is found in the secreted. Required for secretion of EsxA (ESAT-6) and EsxB (CFP-10) and for virulence. This is ESX-1 secretion-associated protein EspA from Mycobacterium tuberculosis (strain CDC 1551 / Oshkosh).